A 221-amino-acid chain; its full sequence is Kinetochore protein Spc25 (221 aa).

Residues 63 to 114 (VIQRREEMEKRVSFMEELAQEVEATKQRNLVMREQIKQQKMLVRQRKNEIME) are a coiled coil.

The protein belongs to the SPC25 family. As to quaternary structure, component of the Ndc80 complex, which is composed of Ndc80, Nuf2 and Spc25.

Its subcellular location is the nucleus. It localises to the chromosome. It is found in the centromere. The protein localises to the kinetochore. Functionally, acts as a component of the essential kinetochore-associated Ndc80 complex, which is required for chromosome segregation and spindle checkpoint activity during meiosis and mitosis. Required for kinetochore integrity and the organization of stable microtubule binding sites in the outer plate of the kinetochore. Participates in SAC signaling that responds specifically to disruptions in spindle microtubule dynamics. The NDC80 complex synergistically enhances the affinity of the SKA1 complex for microtubules and may allow the NDC80 complex to track depolymerizing microtubules. This is Kinetochore protein Spc25 from Drosophila eugracilis (Fruit fly).